The following is a 225-amino-acid chain: Cold-regulated 413 inner membrane protein 1, chloroplastic (225 aa).

The transit peptide at 1–76 (MASLCLSSSR…RKRGSSVVCY (76 aa)) directs the protein to the chloroplast. A topological domain (stromal) is located at residue Ala77. A helical transmembrane segment spans residues 78–98 (APISANSLQWISTISCLALML). At 99–102 (ARGT) the chain is on the chloroplast intermembrane side. Residues 103–123 (GIHKSVVVPLFALHAPSSIVA) form a helical membrane-spanning segment. The Stromal segment spans residues 124–128 (WIKGE). The helical transmembrane segment at 129-149 (YGVWAAFLALIARLFFTFPGE) threads the bilayer. At 150–151 (LE) the chain is on the chloroplast intermembrane side. The helical transmembrane segment at 152-172 (LPFIALLLVIVAPYQVMNIRG) threads the bilayer. Residues 173 to 175 (KQE) lie on the Stromal side of the membrane. Residues 176-196 (GAIIAIAISGFLAFQHFSRAG) form a helical membrane-spanning segment. At 197 to 204 (SLEKAYEK) the chain is on the chloroplast intermembrane side. The helical transmembrane segment at 205–225 (GSVLATVAIIGVTVVSLLLLL) threads the bilayer.

The protein belongs to the Cold-regulated 413 protein family.

The protein resides in the plastid. It localises to the chloroplast inner membrane. This chain is Cold-regulated 413 inner membrane protein 1, chloroplastic (COR413IM1), found in Arabidopsis thaliana (Mouse-ear cress).